Reading from the N-terminus, the 105-residue chain is Large ribosomal subunit protein uL24 (105 aa).

The protein belongs to the universal ribosomal protein uL24 family. As to quaternary structure, part of the 50S ribosomal subunit.

Its function is as follows. One of two assembly initiator proteins, it binds directly to the 5'-end of the 23S rRNA, where it nucleates assembly of the 50S subunit. One of the proteins that surrounds the polypeptide exit tunnel on the outside of the subunit. The chain is Large ribosomal subunit protein uL24 from Aromatoleum aromaticum (strain DSM 19018 / LMG 30748 / EbN1) (Azoarcus sp. (strain EbN1)).